We begin with the raw amino-acid sequence, 520 residues long: GMP synthase [glutamine-hydrolyzing] (520 aa).

The 194-residue stretch at 12–205 (KIIVLDYGSQ…AISICGARGD (194 aa)) folds into the Glutamine amidotransferase type-1 domain. Catalysis depends on Cys89, which acts as the Nucleophile. Residues His179 and Glu181 contribute to the active site. Residues 206–395 (WSMDNFIDME…LGMPEEIVWR (190 aa)) enclose the GMPS ATP-PPase domain. ATP is bound at residue 233 to 239 (SGGVDSS).

Homodimer.

It catalyses the reaction XMP + L-glutamine + ATP + H2O = GMP + L-glutamate + AMP + diphosphate + 2 H(+). It participates in purine metabolism; GMP biosynthesis; GMP from XMP (L-Gln route): step 1/1. Functionally, catalyzes the synthesis of GMP from XMP. The protein is GMP synthase [glutamine-hydrolyzing] of Streptococcus pyogenes serotype M1.